The primary structure comprises 226 residues: Survival motor neuron protein (226 aa).

Over residues 35–44 (ADSTNKREEE) the composition is skewed to basic and acidic residues. Residues 35–68 (ADSTNKREEENAAAAEEEAGEISATGGATSPEPV) form a disordered region. Positions 69–128 (SFKVGDYARATYVDGVDYEGAVVSINEEKGTCVLRYLGYENEQEVLLVDLLPSWGKRVRR) constitute a Tudor domain. The tract at residues 137–172 (DEDEQLSRPKASAGSHSKTPKSSRRSRISGGLVMPP) is disordered. The segment covering 154–163 (KTPKSSRRSR) has biased composition (basic residues). The required for homodimerization stretch occupies residues 159 to 226 (SRRSRISGGL…TSGKKKTPKK (68 aa)).

Belongs to the SMN family. Homodimer (via C-terminal region). Component of the core survival motor neuron (SMN) complex composed of Smn, Gem2, Gem3, rig/Gem5 and one of 3 almost identical Gem4 paralogs encoded by Glos/Gem4a, Gem4b or Gem4c. Interacts with Gem3 (via C-terminus); the interaction is direct and stabilizes Smn. Part of a minimal SMN complex composed of Smn and Gem2 only; this complex is active in UsnRNP assembly. The SMN complex associates with the entire set of spliceosomal snRNP Sm proteins, SmB, SmD1, SmD2, SmD3, SmE, SmF and SmG, and with the snRNP-specific proteins snRNP-U1-70K, U2A, snf/U1A and U5-116KD. Interacts with Glos/Gem4a; the interaction is probably indirect. Interacts with Sbat and Vlet; Sbat and Vlet, along with Hez, may form an accessory subcomplex involved in SMN complex function. Interacts weakly with Gem3. Interacts with SmB and SmD1; the interaction is favored by methylation of the Sm proteins. Interacts with Actn; the interaction occurs in thoracic tissues and in adult flies. Interacts with Rpp20. Interacts with msk and Snup; these interactions are RNA-dependent. In terms of tissue distribution, in late first instar larvae, expressed in pNBs. Expression increases as the pNBs enlarge, with the highest accumulation observed in dividing pNBs of second and third instar larvae. Enriched in type ID (thoracic and brain lobe), type IA and all the mira-expressing NBs of the brain lobes. In larvae, also expressed in muscle fibers. In larval and adult testis, expressed in germline stem cells and gonialblast, expression decreases as cells differentiate into cysts and spermatocytes. In adult fly thorax, expressed in the IFMs. In adult ovary, expressed in germline stem cells, cystoblasts, follicle cells, nurse cells and oocyte (at protein level). Also expressed in larval salivary glands.

Its subcellular location is the cytoplasm. It is found in the nucleus. It localises to the U-body. The protein localises to the gem. The protein resides in the cajal body. Its subcellular location is the myofibril. It is found in the sarcomere. It localises to the i band. The protein localises to the z line. In terms of biological role, core component of the survival motor neuron (SMN) complex that plays an essential role in spliceosomal small nuclear ribonucleoprotein (snRNP) assembly in the cytoplasm, is required for pre-mRNA splicing in the nucleus and acts as a chaperone that discriminates target and non-target RNAs of Sm proteins. A major component of nuclear bodies known as gems (gemini of Cajal bodies) thought to be storage depots of excess SMN complexes. Required for normal expression of spliceosomal snRNAs and for U12 intron splicing. Required in cholinergic neurons, but not in motor neurons, to ensure correct splicing and proper levels of stas mRNA and normal neurotransmitter release by motor neurons. However, Smn is required in motor neurons, but not in cholinergic neurons, for normal motor behavior but plays no role in synaptic transmission according to a report. In both muscle and neurons, required for the formation of a normal neuromuscular junction (NMJ) structure. Plays a neuron-specific role in long-term homeostatic compensation at the larval NMJ. In the thorax of adult flies, required for Act88F, an indirect flight muscle (IFM)-specific actin, expression and for proper IFM myofibril formation. In nurse cells, oocytes and follicle cells, required to maintain normal organization of nuclear compartments including chromosomes, nucleoli, Cajal bodies, histone locus bodies and heterochromatin. Required for the functional integrity of the cytoplasmic U snRNP body (U body) and P body. Required in dividing postembryonic neuroblasts (pNBs) for the correct basal localization of mira. The tight regulation of its expression is critical for stem cell division, proliferation and differentiation in male germline and developing central nervous system (CNS). Required for tracheal terminal cell lumen formation. In Drosophila melanogaster (Fruit fly), this protein is Survival motor neuron protein.